The primary structure comprises 97 residues: Large ribosomal subunit protein bL28 (97 aa).

It belongs to the bacterial ribosomal protein bL28 family.

In Sphingopyxis alaskensis (strain DSM 13593 / LMG 18877 / RB2256) (Sphingomonas alaskensis), this protein is Large ribosomal subunit protein bL28.